The following is a 738-amino-acid chain: Putative RNA-binding protein EEED8.10 (738 aa).

The RRM domain maps to 112–201 (RKIVVSNISA…QVMVVSAYVS (90 aa)). Positions 211 to 237 (LSDDVGSREDTPLSRASSTQSLASGSE) are disordered. Residues 224–237 (SRASSTQSLASGSE) are compositionally biased toward polar residues. In terms of domain architecture, F-box spans 239-297 (SFNLGNVPDKILRRVISFLPIHETIRLERVNKKFMEESIKSWELVNKIALARETVFNKQ).

The polypeptide is Putative RNA-binding protein EEED8.10 (Caenorhabditis elegans).